We begin with the raw amino-acid sequence, 261 residues long: Hydroxylase cctR (261 aa).

Residues 38–58 form a helical membrane-spanning segment; the sequence is VFVSLLILSNTISFGLLGWIG. Asn-95 carries N-linked (GlcNAc...) asparagine glycosylation. Short sequence motifs (HXXHC) lie at residues 146 to 150 and 176 to 180; these read HEIHC and HIAHC.

This sequence belongs to the ustYa family.

Its subcellular location is the membrane. Its pathway is mycotoxin biosynthesis. In terms of biological role, hydroxylase; part of the gene cluster that mediates the biosynthesis of the mycotoxin cyclochlorotine, a hepatotoxic and carcinogenic cyclic chlorinated pentapeptide. Within the pathway, cctR performs the last step by hydroxylating cyclochlorotine to yield hydroxycyclochlorotine. The NRPS cctN initially catalyzes the condensation of L-serine (Ser), Pro, L-2-aminobutyrate (2Abu), Ser, and beta-Phe in this order to produce isocyclotine. After the dichlorination of Pro2 catalyzed by cctP2 to produce isocyclochlorotine, the cctO-mediated transacylation of isocyclochlorotine can furnish cyclochlorotine. The subsequent hydroxylation of cyclochlorotine by cctR yields hydroxycyclochlorotine as the final product. CctP1 probably acts as a phenylalanine aminomutase and provides the uncommon building block beta-Phe. Furthermore, 2Abu can be synthesized from threonine by one of the threonine dehydratases and transaminases localized outside of the cluster. The functions of the remaining proteins encoded by the cluster, cctM and cctT, have not been identified yet. This is Hydroxylase cctR from Talaromyces islandicus (Penicillium islandicum).